A 456-amino-acid chain; its full sequence is Probable flavin-containing monoamine oxidase A (456 aa).

Residue C394 is modified to S-8alpha-FAD cysteine.

The protein belongs to the flavin monoamine oxidase family. FAD is required as a cofactor.

The enzyme catalyses a secondary aliphatic amine + O2 + H2O = a primary amine + an aldehyde + H2O2. In Dictyostelium discoideum (Social amoeba), this protein is Probable flavin-containing monoamine oxidase A (maoA).